A 38-amino-acid polypeptide reads, in one-letter code: Histatin-1 (38 aa).

The tract at residues Asp1 to Asn38 is disordered. Residue Ser2 is modified to Phosphoserine. Positions His8 to Tyr30 are enriched in basic residues.

It belongs to the histatin/statherin family.

It is found in the secreted. Its function is as follows. Histatins (Hsts) are cationic and histidine-rich secreted peptides mainly synthesized by saliva glands of humans and higher primates. Hsts are considered to be major precursors of the protective proteinaceous structure on tooth surfaces (enamel pellicle). This Macaca fascicularis (Crab-eating macaque) protein is Histatin-1 (HTN1).